The sequence spans 119 residues: UPF0342 protein Athe_0692 (119 aa).

The protein belongs to the UPF0342 family.

The chain is UPF0342 protein Athe_0692 from Caldicellulosiruptor bescii (strain ATCC BAA-1888 / DSM 6725 / KCTC 15123 / Z-1320) (Anaerocellum thermophilum).